A 181-amino-acid chain; its full sequence is Glutamyl-tRNA(Gln) amidotransferase subunit C, chloroplastic/mitochondrial (181 aa).

Belongs to the GatC family. In terms of assembly, subunit of the heterotrimeric GatCAB amidotransferase (AdT) complex, composed of A, B and C subunits.

It is found in the mitochondrion. Its subcellular location is the plastid. It localises to the chloroplast. It carries out the reaction L-glutamyl-tRNA(Gln) + L-glutamine + ATP + H2O = L-glutaminyl-tRNA(Gln) + L-glutamate + ADP + phosphate + H(+). Its function is as follows. Allows the formation of correctly charged Gln-tRNA(Gln) through the transamidation of misacylated Glu-tRNA(Gln) in chloroplasts and mitochondria. The reaction takes place in the presence of glutamine and ATP through an activated gamma-phospho-Glu-tRNA(Gln). The sequence is that of Glutamyl-tRNA(Gln) amidotransferase subunit C, chloroplastic/mitochondrial from Picea sitchensis (Sitka spruce).